A 947-amino-acid chain; its full sequence is Translation initiation factor IF-2 (947 aa).

A disordered region spans residues 61-284; the sequence is IQANQPAKNP…TAKNNKSHKI (224 aa). The span at 151-169 shows a compositional bias: basic and acidic residues; that stretch reads QIEKAKQKLQEIQKSREAL. A compositionally biased stretch (low complexity) spans 175–188; it reads SNANNANSTNNANN. Residues 189-206 show a composition bias toward basic and acidic residues; it reads AKKEISEVKKQEQEIKRH. Residues 207-218 are compositionally biased toward basic residues; the sequence is ENIKRRTGFRVI. Residues 247–262 are compositionally biased toward basic and acidic residues; it reads EDIKKEWQEKDKQEAK. The 170-residue stretch at 446 to 615 folds into the tr-type G domain; sequence ERPPVVTIMG…LIQADIMELK (170 aa). The G1 stretch occupies residues 455–462; the sequence is GHVDHGKT. 455–462 serves as a coordination point for GTP; that stretch reads GHVDHGKT. The segment at 480–484 is G2; that stretch reads GITQH. Positions 501 to 504 are G3; that stretch reads DTPG. Residues 501–505 and 555–558 contribute to the GTP site; these read DTPGH and NKMD. The interval 555 to 558 is G4; it reads NKMD. The tract at residues 591-593 is G5; that stretch reads SAK.

This sequence belongs to the TRAFAC class translation factor GTPase superfamily. Classic translation factor GTPase family. IF-2 subfamily.

The protein resides in the cytoplasm. Its function is as follows. One of the essential components for the initiation of protein synthesis. Protects formylmethionyl-tRNA from spontaneous hydrolysis and promotes its binding to the 30S ribosomal subunits. Also involved in the hydrolysis of GTP during the formation of the 70S ribosomal complex. The chain is Translation initiation factor IF-2 from Helicobacter pylori (strain P12).